Reading from the N-terminus, the 215-residue chain is Cytidylate kinase (215 aa).

10–18 (GPAASGKGT) lines the ATP pocket.

Belongs to the cytidylate kinase family. Type 1 subfamily.

It localises to the cytoplasm. The catalysed reaction is CMP + ATP = CDP + ADP. It catalyses the reaction dCMP + ATP = dCDP + ADP. The sequence is that of Cytidylate kinase from Bartonella quintana (strain Toulouse) (Rochalimaea quintana).